Reading from the N-terminus, the 25-residue chain is Metallothionein (25 aa).

The Cu(+) site is built by cysteine 3, cysteine 5, cysteine 11, cysteine 13, cysteine 18, cysteine 20, and cysteine 23.

Belongs to the metallothionein superfamily. Type 8 family.

Functionally, the metallothioneins are involved in the cellular sequestration of toxic metal ions. Binds six copper (cuprous) ions. The protein is Metallothionein of Agaricus bisporus (White button mushroom).